Reading from the N-terminus, the 295-residue chain is Zygote arrest protein 1.S (295 aa).

Disordered stretches follow at residues 80-115 (SVQCSLGPRTLLRRRPGALRKPPPEQGSPASPTKTV) and 144-186 (EKGE…APAQ). The span at 144-176 (EKGEAVRSEGSEGGRQEGKQGDGEIKEQMKMDK) shows a compositional bias: basic and acidic residues. The segment at 197-280 (KYGYYHCKDC…RQDLCGRCKG (84 aa)) adopts a 3CxxC-type zinc-finger fold.

It belongs to the ZAR1 family. In terms of tissue distribution, ovary. Also expressed in lung and muscle.

It is found in the cytoplasm. The protein resides in the cytoplasmic ribonucleoprotein granule. Its function is as follows. mRNA-binding protein required for maternal mRNA storage, translation and degradation during oocyte maturation. Probably promotes formation of some phase-separated membraneless compartment that stores maternal mRNAs in oocytes: acts by undergoing liquid-liquid phase separation upon binding to maternal mRNAs. Binds to the 3'-UTR of maternal mRNAs in immature oocytes, inhibiting their translation. This chain is Zygote arrest protein 1.S (zar1.S), found in Xenopus laevis (African clawed frog).